Reading from the N-terminus, the 448-residue chain is Phosphoglucosamine mutase (448 aa).

Residue Ser104 is the Phosphoserine intermediate of the active site. 4 residues coordinate Mg(2+): Ser104, Asp243, Asp245, and Asp247. Ser104 is subject to Phosphoserine.

The protein belongs to the phosphohexose mutase family. Mg(2+) is required as a cofactor. Activated by phosphorylation.

It carries out the reaction alpha-D-glucosamine 1-phosphate = D-glucosamine 6-phosphate. Functionally, catalyzes the conversion of glucosamine-6-phosphate to glucosamine-1-phosphate. This Xylella fastidiosa (strain Temecula1 / ATCC 700964) protein is Phosphoglucosamine mutase.